A 135-amino-acid polypeptide reads, in one-letter code: Salivary protein 15 Iper-1 (135 aa).

An N-terminal signal peptide occupies residues 1–22; the sequence is MESFVAMKVVCILFLFVVAAEA. 2 N-linked (GlcNAc...) asparagine glycosylation sites follow: Asn93 and Asn104. The segment at 116–135 is CD4-binding; that stretch reads GPNKQTCADKSKCVGHIPGC.

It belongs to the salp15 family. In terms of assembly, interacts with host CD4. Interacts with host DC-SIGN (CD209). (Microbial infection) Interacts with Borrelia outer surface protein C (OspC). As to expression, expressed in salivary glands from feeding female ticks. Highly expressed 4 days after start of feeding.

Its subcellular location is the secreted. In terms of biological role, salivary tick protein that downregulates host immune system by binding to both dendritic cells, and CD4(+) T cells. Specifically binds to the CD4 coreceptor on T cells. This interaction prevents the activation of the Src kinase, Lck, and its downstream substrate Zap-70, and results in deficient activation of PLCgamma1, the repression of calcium fluxes triggered by T-cell antigen receptor (TCR) ligation, and a subsequent reduction in interleukin-2 production. This salivary protein also binds to DC-SIGN (CD209) on dendritic cells (DC) and activates the Raf-1 kinase/MEK signaling pathway that results in down-regulating expression of pro-inflammatory cytokines. Furthermore, it inhibits T cell proliferation induced by DCs. It also inhibits in vitro keratinocyte inflammation induced by Borrelia burgdorferi or by the major outer surface protein (OspC) of Borrelia. In addition, it downregulates chemokines and monocyte chemoattractant protein 1, as well as several antimicrobial peptides such as defensins, cathelicidin, psoriasin, and RNase 7. Apart from its immunomodulatory activities, it is also associated with protection of Borrelia spirochetes from antibody-mediated killing through its binding to OspC. In vivo, tests on different immune disease animal models show promising therapeutic results, e.g., in inhibiting HIV infection, experimental autoimmune encephalomyelitis, transplantation rejection, and asthma. (Microbial infection) Protects Borrelia garinii from anti-Borrelia antibody-mediated cytotoxicity in vitro. May facilitate B.garinii transmission in mouse model. Its function is as follows. (Microbial infection) Protects Borrelia burgdorferi from anti-Borrelia antibody-mediated cytotoxicity in vitro. Functionally, (Microbial infection) Protects Borrelia afzelii from anti-Borrelia antibody-mediated cytotoxicity in vitro. The chain is Salivary protein 15 Iper-1 from Ixodes persulcatus (Taiga tick).